The following is a 594-amino-acid chain: Choline dehydrogenase, mitochondrial (594 aa).

A mitochondrion-targeting transit peptide spans 1–29 (MWCLLRGLGRPGALARGALGQQQSLGARA). 42-71 (SYVVVGAGSAGCVLAGRLTEDPAERVLLLE) serves as a coordination point for FAD. An N6-succinyllysine modification is found at Lys-436. N6-acetyllysine; alternate is present on residues Lys-484 and Lys-496. An N6-succinyllysine; alternate mark is found at Lys-484 and Lys-496. His-511 (proton acceptor) is an active-site residue. Position 580 is an N6-acetyllysine (Lys-580).

Belongs to the GMC oxidoreductase family. The cofactor is FAD.

The protein resides in the mitochondrion inner membrane. It catalyses the reaction choline + A = betaine aldehyde + AH2. The protein operates within amine and polyamine biosynthesis; betaine biosynthesis via choline pathway; betaine aldehyde from choline (cytochrome c reductase route): step 1/1. The polypeptide is Choline dehydrogenase, mitochondrial (CHDH) (Homo sapiens (Human)).